A 373-amino-acid chain; its full sequence is Peptide chain release factor 1-like, mitochondrial (373 aa).

Residues 1-25 (MRSGFLSGARRLWARRAFSRTPPPS) constitute a mitochondrion transit peptide. Residues 56-110 (QLAAAARLLSEKERELRDTESLLHDENEDLKKLAESEIALCQKQITELKHQIISL) are a coiled coil. Residues 229–293 (PKDLRIDTKR…LRARLYSMHL (65 aa)) form a GGQ domain region. Residues 243-245 (GGQ) carry the GGQ motif. Gln-245 is subject to N5-methylglutamine.

Belongs to the prokaryotic/mitochondrial release factor family. Post-translationally, methylation of glutamine in the GGQ triplet by HEMK1 is conserved from bacteria to mammals.

It is found in the mitochondrion. Its function is as follows. Mitochondrial peptide chain release factor that directs the termination of translation in response to the peptide chain termination codons UAA and UAG. This chain is Peptide chain release factor 1-like, mitochondrial (Mtrf1l), found in Mus musculus (Mouse).